The primary structure comprises 747 residues: MQAAKPLFDYPKYWAECFGPAPFLPMSREEMDQLGWDSCDIIIVTGDAYVDHPSFGMAIIGRLLEAQGFRVGIIAQPDWQSKDDFMKLGEPNLFFGVAAGNMDSMINRYTADKKVRSDDAYTPGGLAGKRPDRASLVYSQRCKEAYSHVPVILGGIEASLRRIAHYDYWQDKVRRSILMDATADILLYGNAERAVVEIAQRLAQGELVSAITDVRGTAFVRRDTPEGWFEIDSTRIDRPGKIDKIINPYVNTQDTAACAIEQEKGAQEDPQEAKVVQLLANPRLTREKTVIRLPSFEKVRNDPVLYAHANRVLHLETNPGNARALVQKHGEVDVWFNPPPIPMSTEEMDYVFGMPYARVPHPAYGKAKIPAYEMIRFSVNIMRGCFGGCTFCSITEHEGRIIQNRSHDSIIREIEEMRDKVPGFTGVVSDLGGPTANMYRIACKSPDIERHCRKPSCVFPGICENLDTDHSSLIELYRKARALPGVKKILIASGLRYDLAVESPEYVKELVTHHVGGYLKIAPEHTERGPLDKMMKPGIGTYDRFKQMFEKFSKEAGKEQYLIPYFIAAHPGTTDEDMMNLALWLKRNGFRADQVQAFYPSPMATATAMYHSGKNPLRKVTYKSDGVTIVKSDQQRRLHKAFLRYHDPKGWPLLREALERMGRADLIGNGKHHLVPTYQPDTGEYQSARRKNSTPAGSKKAGKLLTQHTGLPPRASDGGKPWSKGQQNKATAFAKGKKKSRQPNIPR.

A Radical SAM core domain is found at 371–640 (AYEMIRFSVN…KSDQQRRLHK (270 aa)). Residues cysteine 385, cysteine 389, and cysteine 392 each contribute to the [4Fe-4S] cluster site. The segment at 670 to 747 (GKHHLVPTYQ…KKSRQPNIPR (78 aa)) is disordered.

The protein belongs to the UPF0313 family. Requires [4Fe-4S] cluster as cofactor.

The protein is UPF0313 protein PA4928 of Pseudomonas aeruginosa (strain ATCC 15692 / DSM 22644 / CIP 104116 / JCM 14847 / LMG 12228 / 1C / PRS 101 / PAO1).